A 240-amino-acid chain; its full sequence is Eukaryotic translation initiation factor 3 subunit J (240 aa).

The disordered stretch occupies residues 19 to 95; sequence KADVNKWAGE…FANMTPEQQL (77 aa). The segment covering 28–45 has biased composition (acidic residues); sequence EDEDDVKDNWEDDDEEEE. The segment covering 46–56 has biased composition (basic and acidic residues); the sequence is KKDAPKQEDTP. Positions 60-71 are enriched in basic residues; sequence AKPKKAAQQKKL. 2 coiled-coil regions span residues 63–90 and 176–235; these read KKAA…ANMT and SNNI…DYDD. Residues 72–81 show a composition bias toward basic and acidic residues; that stretch reads KKEDLERLQR.

The protein belongs to the eIF-3 subunit J family. In terms of assembly, component of the eukaryotic translation initiation factor 3 (eIF-3) complex.

Its subcellular location is the cytoplasm. Its function is as follows. Component of the eukaryotic translation initiation factor 3 (eIF-3) complex, which is involved in protein synthesis of a specialized repertoire of mRNAs and, together with other initiation factors, stimulates binding of mRNA and methionyl-tRNAi to the 40S ribosome. The eIF-3 complex specifically targets and initiates translation of a subset of mRNAs involved in cell proliferation. In Anopheles gambiae (African malaria mosquito), this protein is Eukaryotic translation initiation factor 3 subunit J.